A 114-amino-acid polypeptide reads, in one-letter code: Mobility group protein 1A (114 aa).

Residues 5–71 (PKRPLSAYML…EYEKAMKEFE (67 aa)) constitute a DNA-binding region (HMG box). The disordered stretch occupies residues 69–114 (EFERNGGDKSSGASTKKRGKAAEKKKPAKKSKKKDSEDDEEEDESD). Residues 105 to 114 (EDDEEEDESD) are compositionally biased toward acidic residues.

It belongs to the HMGB family.

The protein localises to the nucleus. It is found in the chromosome. Functionally, found in condensed chromomeres. Binds preferentially to AT-rich DNA. This is Mobility group protein 1A (HMG1A) from Chironomus tentans (Midge).